A 245-amino-acid polypeptide reads, in one-letter code: Probable ABC transporter permease protein HI_0355 (245 aa).

A run of 6 helical transmembrane segments spans residues 9–29, 61–81, 92–112, 115–135, 170–190, and 217–237; these read LLIVGVLLMIWQMVATLGSFP, ICLGLLLGFLFGLISALLLSF, ILVISQAIPVFAIAPLLVLWF, GMASKIVMSVLIIYFPVTAAC, LPAFASGLRIAVSVAPIGAVV, and FAALLILVSISLCLYFSIDWL. Positions 50–234 constitute an ABC transmembrane type-1 domain; it reads LWQHTQVTLL…SISLCLYFSI (185 aa).

The protein belongs to the binding-protein-dependent transport system permease family. CysTW subfamily.

Its subcellular location is the cell inner membrane. Probably part of a binding-protein-dependent transport system. Probably responsible for the translocation of the substrate across the membrane. This is Probable ABC transporter permease protein HI_0355 from Haemophilus influenzae (strain ATCC 51907 / DSM 11121 / KW20 / Rd).